The following is a 371-amino-acid chain: Putative RING finger protein ORF117 (371 aa).

An RING-type zinc finger spans residues 72–108; that stretch reads CCICFRKDVIYKEVPCGHYICVECYKEPIRNVCPECN. Acidic residues predominate over residues 178-192; sequence EEEMNESEAEEEEPV. The interval 178–218 is disordered; it reads EEEMNESEAEEEEPVPEIAQFEALNTPPPPPTNRRPKIRRP.

This is Putative RING finger protein ORF117 from Magallana gigas (Pacific oyster).